We begin with the raw amino-acid sequence, 375 residues long: Monocyte differentiation antigen CD14 (375 aa).

The N-terminal stretch at 1–19 (MERASCLLLLLLPLVHVSA) is a signal peptide. Cystine bridges form between C25–C36 and C34–C51. N37 carries an N-linked (GlcNAc...) asparagine glycan. LRR repeat units follow at residues 54–82 (AVEV…PRQY), 83–118 (ADTV…YSRL), 119–144 (KELT…GLAL), 145–172 (SSLR…KPGL), 173–196 (KVLS…FPAL), 197–224 (TSLD…FPAI), 225–251 (QNLA…GVQP), 252–278 (HSLD…SSAL), 279–299 (NSLN…PAKL), 300–321 (RVLD…LPEV), and 322–349 (DNLT…SGVV). Residue N151 is glycosylated (N-linked (GlcNAc...) asparagine). 2 disulfides stabilise this stretch: C187/C217 and C241/C272. N282 is a glycosylation site (N-linked (GlcNAc...) asparagine). The interval 290–375 (QVPKGLPAKL…VLLQGARGFA (86 aa)) is required for response to bacterial lipopolysaccharide (LPS). The N-linked (GlcNAc...) asparagine glycan is linked to N323. The O-linked (GalNAc...) threonine glycan is linked to T336. Residue N345 is the site of GPI-anchor amidated asparagine attachment. Residues 346–375 (SGVVPACARSTLSVGVSGTLVLLQGARGFA) constitute a propeptide, removed in mature form.

Interacts with LPS-bound LPB. Belongs to the lipopolysaccharide (LPS) receptor, a multi-protein complex containing at least CD14, LY96 and TLR4. Interacts with LPAR1. Interacts with the TLR2:TLR6 or TLR2:TLR1 heterodimers; upon interaction with ligands such as diacylated lipopeptides and triacylated lipopeptides, respectively. Interacts with MYO18A. Interacts with FSTL1. Post-translationally, N- and O- glycosylated. O-glycosylated with a core 1 or possibly core 8 glycan. As to expression, detected on macrophages (at protein level). Expressed strongly on the surface of monocytes and weakly on the surface of granulocytes; also expressed by most tissue macrophages.

It localises to the cell membrane. The protein localises to the secreted. It is found in the membrane raft. The protein resides in the golgi apparatus. In terms of biological role, coreceptor for bacterial lipopolysaccharide. In concert with LBP, binds to monomeric lipopolysaccharide and delivers it to the LY96/TLR4 complex, thereby mediating the innate immune response to bacterial lipopolysaccharide (LPS). Acts via MyD88, TIRAP and TRAF6, leading to NF-kappa-B activation, cytokine secretion and the inflammatory response. Acts as a coreceptor for TLR2:TLR6 heterodimer in response to diacylated lipopeptides and for TLR2:TLR1 heterodimer in response to triacylated lipopeptides, these clusters trigger signaling from the cell surface and subsequently are targeted to the Golgi in a lipid-raft dependent pathway. Binds electronegative LDL (LDL(-)) and mediates the cytokine release induced by LDL(-). This Homo sapiens (Human) protein is Monocyte differentiation antigen CD14 (CD14).